The primary structure comprises 87 residues: Small ribosomal subunit protein uS15c (87 aa).

Belongs to the universal ribosomal protein uS15 family. Part of the 30S ribosomal subunit.

The protein resides in the plastid. It localises to the chloroplast. This chain is Small ribosomal subunit protein uS15c (rps15), found in Solanum tuberosum (Potato).